A 464-amino-acid chain; its full sequence is Neuronal acetylcholine receptor subunit beta-3 (464 aa).

The first 30 residues, 1–30 (MTGFLRVFLVLSATLSGSWVTLTATAGLSS), serve as a signal peptide directing secretion. The Extracellular portion of the chain corresponds to 31-238 (VAEHEDALLR…VTYSFVLRRL (208 aa)). 2 N-linked (GlcNAc...) asparagine glycosylation sites follow: Asn-55 and Asn-172. A disulfide bridge connects residues Cys-159 and Cys-173. The next 3 helical transmembrane spans lie at 239–263 (PLFYTLFLIIPCLGLSFLTVLVFYL), 271–288 (LSLSTSVLVSLTVFLLVI), and 305–326 (YLLFIMIFVTLSIIVTVFVINV). Topologically, residues 327–434 (HHRSSSTYHP…WKFVAQVLDR (108 aa)) are cytoplasmic. The chain crosses the membrane as a helical span at residues 435-453 (IFLWLFLIASVLGSILIFI).

This sequence belongs to the ligand-gated ion channel (TC 1.A.9) family. Acetylcholine receptor (TC 1.A.9.1) subfamily. Beta-3/CHRNB3 sub-subfamily. Neuronal AChR seems to be composed of two different type of subunits: alpha and beta. CHRNB3/beta-3 subunit is only able to form functional nAChRs when co-assembled with another beta subunit. Participates in pentameric assemblies along with CHRNA4/alpha-4 and CHRNB2/beta-2 subunits and with CHRNA6/alpha-6 as well, forming stoichiometries such as (CHRNA3:CHRNB4)2:CHRNB3, (CHRNA4:CHRNB2)2:CHRNB3 or (CHRNA6:CHRNB2)2:CHRNB3.

Its subcellular location is the synaptic cell membrane. It localises to the cell membrane. It carries out the reaction Ca(2+)(in) = Ca(2+)(out). The enzyme catalyses K(+)(in) = K(+)(out). It catalyses the reaction Na(+)(in) = Na(+)(out). With respect to regulation, activated by a myriad of ligands such as acetylcholine, cytisine, nicotine, choline and epibatidine. In terms of biological role, component of neuronal acetylcholine receptors (nAChRs) that function as pentameric, ligand-gated cation channels with high calcium permeability among other activities. nAChRs are excitatory neurotrasnmitter receptors formed by a collection of nAChR subunits known to mediate synaptic transmission in the nervous system and the neuromuscular junction. Each nAchR subunit confers differential attributes to channel properties, including activation, deactivation and desensitization kinetics, pH sensitivity, cation permeability, and binding to allosteric modulators. Has an accessory rather than functional role and is only able to form functional nAChRs when co-assembled with another beta subunit. Participates in pentameric assemblies along with CHRNA3, CHRNA4, CHRNA6, CHRNB2 and CHRNB4. Modulates receptor assembly and increases receptor sensitivity to nicotine when associated with CHRNB2, CHRNA4 and/or CHRNA6 as well as CHRNA3 and CHRNB4. Seems to play a role in nicotine addiction. The sequence is that of Neuronal acetylcholine receptor subunit beta-3 (Chrnb3) from Rattus norvegicus (Rat).